A 129-amino-acid polypeptide reads, in one-letter code: Fluoride-specific ion channel FluC 2 (129 aa).

4 helical membrane passes run 4–24 (LDVM…WWIG), 39–59 (TFLI…LFGV), 65–85 (YGTM…TTFS), and 100–120 (GGLA…AAWL). Na(+)-binding residues include Gly-79 and Thr-82.

The protein belongs to the fluoride channel Fluc/FEX (TC 1.A.43) family.

It localises to the cell inner membrane. The enzyme catalyses fluoride(in) = fluoride(out). With respect to regulation, na(+) is not transported, but it plays an essential structural role and its presence is essential for fluoride channel function. In terms of biological role, fluoride-specific ion channel. Important for reducing fluoride concentration in the cell, thus reducing its toxicity. This is Fluoride-specific ion channel FluC 2 from Brucella suis biovar 1 (strain 1330).